The chain runs to 473 residues: Cysteine--tRNA ligase (473 aa).

Residue cysteine 28 coordinates Zn(2+). Positions 30 to 40 match the 'HIGH' region motif; the sequence is PTVYNMPHIGN. Zn(2+)-binding residues include cysteine 213, histidine 238, and glutamate 242. The 'KMSKS' region signature appears at 270 to 274; sequence KMSKS. Lysine 273 lines the ATP pocket.

It belongs to the class-I aminoacyl-tRNA synthetase family. Requires Zn(2+) as cofactor.

It localises to the cytoplasm. The catalysed reaction is tRNA(Cys) + L-cysteine + ATP = L-cysteinyl-tRNA(Cys) + AMP + diphosphate. The chain is Cysteine--tRNA ligase from Methanosarcina mazei (strain ATCC BAA-159 / DSM 3647 / Goe1 / Go1 / JCM 11833 / OCM 88) (Methanosarcina frisia).